Here is a 386-residue protein sequence, read N- to C-terminus: Na(+)/H(+) antiporter NhaA (386 aa).

11 helical membrane-spanning segments follow: residues N11–N31, L60–V80, M96–F116, G126–G146, M155–F175, L180–G200, V218–I238, V260–V280, I293–V313, L326–I346, and L358–Y378.

The protein belongs to the NhaA Na(+)/H(+) (TC 2.A.33) antiporter family.

The protein localises to the cell inner membrane. It catalyses the reaction Na(+)(in) + 2 H(+)(out) = Na(+)(out) + 2 H(+)(in). In terms of biological role, na(+)/H(+) antiporter that extrudes sodium in exchange for external protons. The sequence is that of Na(+)/H(+) antiporter NhaA from Erwinia tasmaniensis (strain DSM 17950 / CFBP 7177 / CIP 109463 / NCPPB 4357 / Et1/99).